We begin with the raw amino-acid sequence, 343 residues long: Protein FAM50A-B (343 aa).

2 disordered regions span residues 1 to 25 (MAQYKGAASEAGRAMQLMKKREKQR) and 125 to 181 (EEDE…EEEN). A compositionally biased stretch (acidic residues) spans 125-142 (EEDEECEDEESEEEEEEY). The span at 172 to 181 (PDRDREEEEN) shows a compositional bias: basic and acidic residues.

The protein belongs to the FAM50 family.

Its subcellular location is the nucleus. Functionally, probably involved in the regulation of pre-mRNA splicing. This Xenopus laevis (African clawed frog) protein is Protein FAM50A-B (fam50a-b).